We begin with the raw amino-acid sequence, 163 residues long: Leptin (163 aa).

The signal sequence occupies residues 1-18; the sequence is MCWRPLCRLWSYLVYVQA. Residues C113 and C163 are joined by a disulfide bond.

It belongs to the leptin family. Not exclusively localized in adipose tissue but is also expressed in liver.

It localises to the secreted. Functionally, key player in the regulation of energy balance and body weight control. Once released into the circulation, has central and peripheral effects by binding LEPR, found in many tissues, which results in the activation of several major signaling pathways. This Gallus gallus (Chicken) protein is Leptin (LEP).